We begin with the raw amino-acid sequence, 262 residues long: Ribosomal RNA small subunit methyltransferase A (262 aa).

6 residues coordinate S-adenosyl-L-methionine: His13, Leu15, Gly40, Glu61, Asp85, and Asn103.

This sequence belongs to the class I-like SAM-binding methyltransferase superfamily. rRNA adenine N(6)-methyltransferase family. RsmA subfamily.

The protein resides in the cytoplasm. It carries out the reaction adenosine(1518)/adenosine(1519) in 16S rRNA + 4 S-adenosyl-L-methionine = N(6)-dimethyladenosine(1518)/N(6)-dimethyladenosine(1519) in 16S rRNA + 4 S-adenosyl-L-homocysteine + 4 H(+). In terms of biological role, specifically dimethylates two adjacent adenosines (A1518 and A1519) in the loop of a conserved hairpin near the 3'-end of 16S rRNA in the 30S particle. May play a critical role in biogenesis of 30S subunits. The sequence is that of Ribosomal RNA small subunit methyltransferase A from Bordetella avium (strain 197N).